Consider the following 251-residue polypeptide: 3-deoxy-manno-octulosonate cytidylyltransferase (251 aa).

Belongs to the KdsB family.

It localises to the cytoplasm. The enzyme catalyses 3-deoxy-alpha-D-manno-oct-2-ulosonate + CTP = CMP-3-deoxy-beta-D-manno-octulosonate + diphosphate. The protein operates within nucleotide-sugar biosynthesis; CMP-3-deoxy-D-manno-octulosonate biosynthesis; CMP-3-deoxy-D-manno-octulosonate from 3-deoxy-D-manno-octulosonate and CTP: step 1/1. Its pathway is bacterial outer membrane biogenesis; lipopolysaccharide biosynthesis. In terms of biological role, activates KDO (a required 8-carbon sugar) for incorporation into bacterial lipopolysaccharide in Gram-negative bacteria. In Brucella ovis (strain ATCC 25840 / 63/290 / NCTC 10512), this protein is 3-deoxy-manno-octulosonate cytidylyltransferase.